The sequence spans 330 residues: Aspartate--ammonia ligase (330 aa).

This sequence belongs to the class-II aminoacyl-tRNA synthetase family. AsnA subfamily.

It is found in the cytoplasm. The enzyme catalyses L-aspartate + NH4(+) + ATP = L-asparagine + AMP + diphosphate + H(+). It functions in the pathway amino-acid biosynthesis; L-asparagine biosynthesis; L-asparagine from L-aspartate (ammonia route): step 1/1. In Pectobacterium carotovorum subsp. carotovorum (strain PC1), this protein is Aspartate--ammonia ligase.